The chain runs to 534 residues: Probable alpha-galactosidase A (534 aa).

The first 25 residues, 1-25 (MRLITRWIPLANALASTMPVQVVAS), serve as a signal peptide directing secretion. Cysteine 47 and cysteine 79 are joined by a disulfide. Asparagine 50, asparagine 88, asparagine 94, and asparagine 124 each carry an N-linked (GlcNAc...) asparagine glycan. Cysteine 127 and cysteine 157 form a disulfide bridge. Aspartate 155 acts as the Nucleophile in catalysis. A glycan (N-linked (GlcNAc...) asparagine) is linked at asparagine 204. The active-site Proton donor is the aspartate 213. Positions 413–534 (CSQVIPTGLI…GLPAGVHVAL (122 aa)) constitute a Ricin B-type lectin domain. The cysteines at positions 430 and 443 are disulfide-linked. Asparagine 444 is a glycosylation site (N-linked (GlcNAc...) asparagine). Cysteine 468 and cysteine 481 are oxidised to a cystine.

Belongs to the glycosyl hydrolase 27 family.

It localises to the secreted. It carries out the reaction Hydrolysis of terminal, non-reducing alpha-D-galactose residues in alpha-D-galactosides, including galactose oligosaccharides, galactomannans and galactolipids.. Functionally, hydrolyzes a variety of simple alpha-D-galactoside as well as more complex molecules such as oligosaccharides and polysaccharides. The sequence is that of Probable alpha-galactosidase A (aglA) from Aspergillus flavus (strain ATCC 200026 / FGSC A1120 / IAM 13836 / NRRL 3357 / JCM 12722 / SRRC 167).